We begin with the raw amino-acid sequence, 306 residues long: Tryptophan 2,3-dioxygenase (306 aa).

The segment at 1–29 is disordered; it reads MQPPGDDAAPRCPFAGAHAPDAPHVPEAA. Substrate contacts are provided by residues 75 to 79, Tyr-137, and Arg-141; that span reads FIIQH. Position 264 (His-264) interacts with heme. Thr-278 is a substrate binding site.

This sequence belongs to the tryptophan 2,3-dioxygenase family. In terms of assembly, homotetramer. Requires heme as cofactor.

It carries out the reaction L-tryptophan + O2 = N-formyl-L-kynurenine. The protein operates within amino-acid degradation; L-tryptophan degradation via kynurenine pathway; L-kynurenine from L-tryptophan: step 1/2. Its function is as follows. Heme-dependent dioxygenase that catalyzes the oxidative cleavage of the L-tryptophan (L-Trp) pyrrole ring and converts L-tryptophan to N-formyl-L-kynurenine. Catalyzes the oxidative cleavage of the indole moiety. The chain is Tryptophan 2,3-dioxygenase from Burkholderia mallei (strain NCTC 10247).